We begin with the raw amino-acid sequence, 118 residues long: U16-barytoxin-Tl1c (118 aa).

The first 16 residues, 1-16, serve as a signal peptide directing secretion; the sequence is MKTIIVFLSFLVLVLA. The propeptide occupies 17–76; it reads TKFGDANEGVNREQTKEVIQNEFRGDFLNEMAAMSLLQQLEAIESALLEKEADRNSRQKR. 3 disulfide bridges follow: C77–C92, C84–C97, and C91–C112.

The protein belongs to the neurotoxin 14 (magi-1) family. 06 (ICK-Trit) subfamily. Expressed by the venom gland.

The protein resides in the secreted. Functionally, ion channel inhibitor. This Trittame loki (Brush-footed trapdoor spider) protein is U16-barytoxin-Tl1c.